The sequence spans 611 residues: MIQVLLVTICLVVFPYQGSSIILESGKVNDYEVVYPQKIPVLPKSKIQRREQKMYEDTMKYEFKVNGEPVVLHLERNKELFSKDYTETHYSPDGREITTSPPVEDHCYYHGYIQSDIDSTAILNACNGLKGYFRHHGEAYHIEPLKFSDSEAHAVYKYENIEKEDETPKICGVKHSTWESDEPIEKISQKKDFLEEKKYLELYIVADYVMFRKYGRNVTTIRMRVFDMVNYITVVYKALNIHVALIGFEIWSLKDKFVINASTKNNLLHFSIWRSTVLRKRNDNAQLLTGVDLNGYTLGSAYLKAMCDVLQSVGIVQDYSKSPYLVGAAMAHEIGHNLGMEHDTKTCSCMRGNCIMSPEEEGSDFPMEFSSCSLYDFQNYMLTDTPQCLINKPSNTSIIKNAVCGNYVEEEGEECDCGSPEQCENNCCEAATCKLKPGAKCAKGACCKKCQFKKAGAECRAARNECDLPEFCIGQSAECPMDRFHKNGHSCQNDQGYCFRGYCPTLAKQCITLWGSDAKVAPDECFQNNTNGNEYDYCKKTNNVIIPCKPTDVKCGRLYCTGGTENPSEGEKISSDPCKASYSEIEDIGMVDHRTKCGEKMVCSDGKCIPL.

The signal sequence occupies residues Met-1–Ser-20. The propeptide occupies Ile-21 to Ile-187. Residues Lys-198 to Pro-393 form the Peptidase M12B domain. 2 N-linked (GlcNAc...) asparagine glycosylation sites follow: Asn-217 and Asn-260. 3 disulfide bridges follow: Cys-307-Cys-388, Cys-347-Cys-372, and Cys-349-Cys-354. His-332 serves as a coordination point for Zn(2+). Residue Glu-333 is part of the active site. Residues His-336 and His-342 each contribute to the Zn(2+) site. N-linked (GlcNAc...) asparagine glycosylation occurs at Asn-395. Residues Asn-401–Asn-487 form the Disintegrin domain. Intrachain disulfides connect Cys-404–Cys-433, Cys-415–Cys-428, Cys-417–Cys-423, Cys-427–Cys-450, Cys-441–Cys-447, Cys-446–Cys-472, Cys-459–Cys-479, Cys-466–Cys-498, Cys-491–Cys-503, Cys-510–Cys-560, Cys-525–Cys-578, Cys-538–Cys-548, Cys-555–Cys-603, and Cys-597–Cys-608. The short motif at Glu-465 to Asp-467 is the D/ECD-tripeptide element. An N-linked (GlcNAc...) asparagine glycan is attached at Asn-528.

The protein belongs to the venom metalloproteinase (M12B) family. P-III subfamily. P-IIIa sub-subfamily. As to quaternary structure, monomer. Requires Zn(2+) as cofactor. In terms of tissue distribution, expressed by the venom gland.

The protein resides in the secreted. Inhibited by EDTA, but not by PMSF. Functionally, snake venom zinc metalloproteinase that has hemorrhagic activity. Inhibits ADP-, TMVA- and stejnulxin-induced platelet aggregation in a dose-dependent manner (on washed platelet, but not on platelet rich plasm). Also specifically degrades alpha-chain of fibrinogen (FGA). This is Zinc metalloproteinase-disintegrin-like ohanin from Ophiophagus hannah (King cobra).